Here is a 196-residue protein sequence, read N- to C-terminus: Phosphate-specific transport system accessory protein PhoU homolog (196 aa).

Belongs to the PhoU family. Homodimer.

The protein resides in the cytoplasm. Its function is as follows. Plays a role in the regulation of phosphate uptake. The chain is Phosphate-specific transport system accessory protein PhoU homolog from Archaeoglobus fulgidus (strain ATCC 49558 / DSM 4304 / JCM 9628 / NBRC 100126 / VC-16).